Reading from the N-terminus, the 176-residue chain is Small ribosomal subunit protein uS5 (176 aa).

The S5 DRBM domain maps to 11 to 74; it reads LSEVLVDVNR…QAAKKRMMKV (64 aa).

The protein belongs to the universal ribosomal protein uS5 family. As to quaternary structure, part of the 30S ribosomal subunit. Contacts proteins S4 and S8.

In terms of biological role, with S4 and S12 plays an important role in translational accuracy. Its function is as follows. Located at the back of the 30S subunit body where it stabilizes the conformation of the head with respect to the body. The polypeptide is Small ribosomal subunit protein uS5 (Rickettsia akari (strain Hartford)).